The chain runs to 114 residues: Nuclear transition protein 2 (114 aa).

The segment at 1–114 (MDTKMQSLPT…KRRSSGRRYK (114 aa)) is disordered. Zn(2+)-binding residues include histidine 12, histidine 14, histidine 16, histidine 24, cysteine 29, cysteine 31, cysteine 35, and cysteine 38. Positions 16–25 (HSSSRPQSHT) are enriched in low complexity. Positions 87 to 95 (GKVSKRKAV) match the Nuclear localization signal motif. Basic residues predominate over residues 90 to 114 (SKRKAVRRRKRTHRAKRRSSGRRYK). Threonine 101 bears the Phosphothreonine; by PKA mark. At serine 109 the chain carries Phosphoserine; by PKA.

The protein belongs to the nuclear transition protein 2 family. In terms of tissue distribution, testis.

It localises to the nucleus. It is found in the nucleolus. Its subcellular location is the chromosome. Its function is as follows. Plays a key role in the replacement of histones to protamine in the elongating spermatids of mammals. In condensing spermatids, loaded onto the nucleosomes, where it promotes the recruitment and processing of protamines, which are responsible for histone eviction. This is Nuclear transition protein 2 (Tnp2) from Rattus norvegicus (Rat).